We begin with the raw amino-acid sequence, 304 residues long: Coenzyme PQQ synthesis protein B (304 aa).

The protein belongs to the PqqB family.

Its pathway is cofactor biosynthesis; pyrroloquinoline quinone biosynthesis. May be involved in the transport of PQQ or its precursor to the periplasm. The chain is Coenzyme PQQ synthesis protein B from Gluconobacter oxydans (strain 621H) (Gluconobacter suboxydans).